The primary structure comprises 259 residues: Insulin-like growth factor-binding protein 4 (259 aa).

The first 22 residues, 1-22, serve as a signal peptide directing secretion; the sequence is MLPLCLVAALLLSASGPRPSLG. In terms of domain architecture, IGFBP N-terminal spans 24 to 104; the sequence is EAIHCPPCSE…MHGQGLCMEL (81 aa). Cystine bridges form between C28–C54, C31–C56, C39–C57, C45–C60, C68–C81, and C75–C101. The segment at 115 to 136 is disordered; that stretch reads QPSDKDEGDHPNNSFSPCSPQD. N126 carries N-linked (GlcNAc...) asparagine glycosylation. 4 disulfides stabilise this stretch: C132-C139, C175-C205, C216-C227, and C229-C250. The 79-residue stretch at 172 to 250 folds into the Thyroglobulin type-1 domain; the sequence is QGSCQSELHR…GLEPKGELDC (79 aa). S256 bears the Phosphoserine mark.

In terms of assembly, binds IGF2 more than IGF1.

The protein resides in the secreted. In terms of biological role, IGF-binding proteins prolong the half-life of the IGFs and have been shown to either inhibit or stimulate the growth promoting effects of the IGFs on cell culture. They alter the interaction of IGFs with their cell surface receptors. The protein is Insulin-like growth factor-binding protein 4 (IGFBP4) of Sus scrofa (Pig).